Reading from the N-terminus, the 325-residue chain is LIM and senescent cell antigen-like-containing domain protein 1 (325 aa).

Ala-2 is modified (N-acetylalanine). 5 consecutive LIM zinc-binding domains span residues 10 to 62 (CERC…CEHD), 71 to 121 (CHQC…CRPC), 135 to 184 (CQKC…CLPC), 193 to 243 (CGAC…CETH), and 252 to 303 (CFHC…CKKC).

Component of the heterotrimeric IPP (ILK-PINCH-PARVIN) complex composed of ILK, LIMS1/PINCH and PARVA; the complex binds to F-actin via the C-terminal tail of LIMS1 and the N-terminal region of PARVA, promoting F-actin filament bundling. Formation of the IPP complex is dependent on protein kinase C and precedes integrin-mediated cell adhesion and spreading. Competes with LIMS2 for interaction with ILK. Interacts with SH3/SH2 adapter NCK2, thereby linking the complex to cell surface receptors. Interacts (via LIM zinc-binding 5) with TGFB1I1.

Its subcellular location is the cell junction. It is found in the focal adhesion. The protein localises to the cell membrane. Functionally, within the IPP (ILK-PINCH-PARVIN) complex, binds to F-actin, promoting F-actin bundling, a process required to generate force for actin cytoskeleton reorganization and subsequent dynamic cell adhesion events such as cell spreading and migration. The chain is LIM and senescent cell antigen-like-containing domain protein 1 (Lims1) from Mus musculus (Mouse).